The following is a 1954-amino-acid chain: Integrin beta-like protein C (1954 aa).

Positions 1–20 are cleaved as a signal peptide; sequence MNKLFYLFILIASLFILTDA. At 21–1883 the chain is on the extracellular side; the sequence is SHFRFGTISW…TTTQTNDNKT (1863 aa). Residues N138 and N354 are each glycosylated (N-linked (GlcNAc...) asparagine). The EGF-like domain occupies 428-465; that stretch reads YGENCVAVPPCVNGVPNSGINGDGKCLCSNGWTGADCS. 2 cysteine pairs are disulfide-bonded: C438–C453 and C455–C464. Residue N479 is glycosylated (N-linked (GlcNAc...) asparagine). The VWFA domain occupies 521–706; that stretch reads DVYVLVDANL…TGVKNVLSKI (186 aa). Residues N1348, N1382, N1628, N1678, N1742, N1770, N1820, N1860, and N1881 are each glycosylated (N-linked (GlcNAc...) asparagine). A helical transmembrane segment spans residues 1884–1904; sequence VLTGAIAGAAAGTALIAAAAW. Residues 1905–1954 lie on the Cytoplasmic side of the membrane; it reads RLLRKAAPPTDTFFSEAAFLGDGVSSNPLYEQSASAAENPLYQSASDTTD.

Belongs to the SIB family. Interacts with talA/talin.

Its subcellular location is the membrane. Its function is as follows. Implicated in cellular adhesion. In Dictyostelium discoideum (Social amoeba), this protein is Integrin beta-like protein C (sibC).